The primary structure comprises 502 residues: Aspartyl/glutamyl-tRNA(Asn/Gln) amidotransferase subunit B (502 aa).

This sequence belongs to the GatB/GatE family. GatB subfamily. As to quaternary structure, heterotrimer of A, B and C subunits.

The catalysed reaction is L-glutamyl-tRNA(Gln) + L-glutamine + ATP + H2O = L-glutaminyl-tRNA(Gln) + L-glutamate + ADP + phosphate + H(+). It catalyses the reaction L-aspartyl-tRNA(Asn) + L-glutamine + ATP + H2O = L-asparaginyl-tRNA(Asn) + L-glutamate + ADP + phosphate + 2 H(+). Allows the formation of correctly charged Asn-tRNA(Asn) or Gln-tRNA(Gln) through the transamidation of misacylated Asp-tRNA(Asn) or Glu-tRNA(Gln) in organisms which lack either or both of asparaginyl-tRNA or glutaminyl-tRNA synthetases. The reaction takes place in the presence of glutamine and ATP through an activated phospho-Asp-tRNA(Asn) or phospho-Glu-tRNA(Gln). The sequence is that of Aspartyl/glutamyl-tRNA(Asn/Gln) amidotransferase subunit B from Arthrobacter sp. (strain FB24).